Consider the following 31-residue polypeptide: Cytochrome b6-f complex subunit 6 (31 aa).

The helical transmembrane segment at 4 to 24 threads the bilayer; that stretch reads ITSYFGFLLAALTITSALLIG.

This sequence belongs to the PetL family. The 4 large subunits of the cytochrome b6-f complex are cytochrome b6, subunit IV (17 kDa polypeptide, PetD), cytochrome f and the Rieske protein, while the 4 small subunits are PetG, PetL, PetM and PetN. The complex functions as a dimer.

Its subcellular location is the plastid. The protein localises to the chloroplast thylakoid membrane. Its function is as follows. Component of the cytochrome b6-f complex, which mediates electron transfer between photosystem II (PSII) and photosystem I (PSI), cyclic electron flow around PSI, and state transitions. PetL is important for photoautotrophic growth as well as for electron transfer efficiency and stability of the cytochrome b6-f complex. The protein is Cytochrome b6-f complex subunit 6 of Piper cenocladum (Ant piper).